The sequence spans 214 residues: MRPPALTPRLLLRAYALGIFPMAESRDDPEIHWIDPRHRGIFPLDEFHISRSLARRIRRMDWRVGVNEDFAATVEACADREETWINPTIFRLYVELHALGHAHSLEVREGETLVGGVYGVTLGRAFFGESMFSRRTDASKVALAFLIDRLRAGGFTLFDTQFLTPHLASLGAIEIRRSDYHQRLTEALAGNASFTPEGYWADPASVVQRNSQTS.

Belongs to the L/F-transferase family.

It is found in the cytoplasm. The catalysed reaction is N-terminal L-lysyl-[protein] + L-leucyl-tRNA(Leu) = N-terminal L-leucyl-L-lysyl-[protein] + tRNA(Leu) + H(+). It carries out the reaction N-terminal L-arginyl-[protein] + L-leucyl-tRNA(Leu) = N-terminal L-leucyl-L-arginyl-[protein] + tRNA(Leu) + H(+). It catalyses the reaction L-phenylalanyl-tRNA(Phe) + an N-terminal L-alpha-aminoacyl-[protein] = an N-terminal L-phenylalanyl-L-alpha-aminoacyl-[protein] + tRNA(Phe). Its function is as follows. Functions in the N-end rule pathway of protein degradation where it conjugates Leu, Phe and, less efficiently, Met from aminoacyl-tRNAs to the N-termini of proteins containing an N-terminal arginine or lysine. The protein is Leucyl/phenylalanyl-tRNA--protein transferase of Cereibacter sphaeroides (strain KD131 / KCTC 12085) (Rhodobacter sphaeroides).